Reading from the N-terminus, the 141-residue chain is Holo-[acyl-carrier-protein] synthase (141 aa).

2 residues coordinate Mg(2+): aspartate 8 and glutamate 63.

This sequence belongs to the P-Pant transferase superfamily. AcpS family. Mg(2+) is required as a cofactor.

It is found in the cytoplasm. The enzyme catalyses apo-[ACP] + CoA = holo-[ACP] + adenosine 3',5'-bisphosphate + H(+). In terms of biological role, transfers the 4'-phosphopantetheine moiety from coenzyme A to a Ser of acyl-carrier-protein. The protein is Holo-[acyl-carrier-protein] synthase of Rhodospirillum centenum (strain ATCC 51521 / SW).